The following is a 125-amino-acid chain: Aspartate 1-decarboxylase (125 aa).

The active-site Schiff-base intermediate with substrate; via pyruvic acid is Ser-25. The residue at position 25 (Ser-25) is a Pyruvic acid (Ser). Residue Thr-57 coordinates substrate. Tyr-58 acts as the Proton donor in catalysis. Gly-71–Ala-73 is a substrate binding site.

It belongs to the PanD family. As to quaternary structure, heterooctamer of four alpha and four beta subunits. Requires pyruvate as cofactor. In terms of processing, is synthesized initially as an inactive proenzyme, which is activated by self-cleavage at a specific serine bond to produce a beta-subunit with a hydroxyl group at its C-terminus and an alpha-subunit with a pyruvoyl group at its N-terminus.

It is found in the cytoplasm. The catalysed reaction is L-aspartate + H(+) = beta-alanine + CO2. It participates in cofactor biosynthesis; (R)-pantothenate biosynthesis; beta-alanine from L-aspartate: step 1/1. Functionally, catalyzes the pyruvoyl-dependent decarboxylation of aspartate to produce beta-alanine. In Hydrogenobaculum sp. (strain Y04AAS1), this protein is Aspartate 1-decarboxylase.